The chain runs to 735 residues: Transcription factor sphG (735 aa).

Positions 13-40 form a DNA-binding region, zn(2)-C6 fungal-type; sequence CDQCRARKIRCSREKPSCRNCGRLGLQC. The interval 89 to 110 is disordered; sequence TISPSARCPASPASPSPRLSDK. A compositionally biased stretch (low complexity) spans 91–106; that stretch reads SPSARCPASPASPSPR.

It is found in the nucleus. In terms of biological role, transcription factor that regulates the expression of the gene cluster that mediates the biosynthesis of sphingofungins, bioactive molecules acting as sphingolipid inhibitors via inhibiting serine palmitoyl transferase (SPT). The polypeptide is Transcription factor sphG (Aspergillus fumigatus (strain CBS 144.89 / FGSC A1163 / CEA10) (Neosartorya fumigata)).